The following is a 62-amino-acid chain: High-potential iron-sulfur protein (62 aa).

[4Fe-4S] cluster-binding residues include Cys-22, Cys-25, Cys-40, and Cys-55.

Belongs to the high-potential iron-sulfur protein (HiPIP) family. In terms of assembly, homodimer.

In terms of biological role, specific class of high-redox-potential 4Fe-4S ferredoxins. Functions in anaerobic electron transport in most purple and in some other photosynthetic bacteria and in at least one genus (Paracoccus) of halophilic, denitrifying bacteria. In Rhodocyclus tenuis (Rhodospirillum tenue), this protein is High-potential iron-sulfur protein (hip).